A 352-amino-acid chain; its full sequence is Biotin synthase (352 aa).

One can recognise a Radical SAM core domain in the interval 44–262 (NRVQVSTLLS…LAVARIMMPK (219 aa)). Residues Cys59, Cys63, and Cys66 each coordinate [4Fe-4S] cluster. The [2Fe-2S] cluster site is built by Cys103, Cys134, Cys194, and Arg266.

It belongs to the radical SAM superfamily. Biotin synthase family. As to quaternary structure, homodimer. It depends on [4Fe-4S] cluster as a cofactor. Requires [2Fe-2S] cluster as cofactor.

It catalyses the reaction (4R,5S)-dethiobiotin + (sulfur carrier)-SH + 2 reduced [2Fe-2S]-[ferredoxin] + 2 S-adenosyl-L-methionine = (sulfur carrier)-H + biotin + 2 5'-deoxyadenosine + 2 L-methionine + 2 oxidized [2Fe-2S]-[ferredoxin]. It participates in cofactor biosynthesis; biotin biosynthesis; biotin from 7,8-diaminononanoate: step 2/2. Its function is as follows. Catalyzes the conversion of dethiobiotin (DTB) to biotin by the insertion of a sulfur atom into dethiobiotin via a radical-based mechanism. The sequence is that of Biotin synthase from Pseudomonas aeruginosa (strain LESB58).